The sequence spans 294 residues: Bifunctional protein FolD (294 aa).

Residues glycine 164–serine 166, serine 193, and isoleucine 234 contribute to the NADP(+) site.

Belongs to the tetrahydrofolate dehydrogenase/cyclohydrolase family. Homodimer.

It catalyses the reaction (6R)-5,10-methylene-5,6,7,8-tetrahydrofolate + NADP(+) = (6R)-5,10-methenyltetrahydrofolate + NADPH. It carries out the reaction (6R)-5,10-methenyltetrahydrofolate + H2O = (6R)-10-formyltetrahydrofolate + H(+). It participates in one-carbon metabolism; tetrahydrofolate interconversion. Functionally, catalyzes the oxidation of 5,10-methylenetetrahydrofolate to 5,10-methenyltetrahydrofolate and then the hydrolysis of 5,10-methenyltetrahydrofolate to 10-formyltetrahydrofolate. This is Bifunctional protein FolD from Flavobacterium psychrophilum (strain ATCC 49511 / DSM 21280 / CIP 103535 / JIP02/86).